The chain runs to 376 residues: Alcohol dehydrogenase class-3 (376 aa).

Position 1 is an N-acetylserine (Ser1). Zn(2+)-binding residues include Cys47, His69, Cys99, Cys102, Cys105, Cys113, and Cys176.

Belongs to the zinc-containing alcohol dehydrogenase family. Class-III subfamily. In terms of assembly, homodimer. Zn(2+) serves as cofactor. Liver and gut.

It localises to the cytoplasm. It carries out the reaction a primary alcohol + NAD(+) = an aldehyde + NADH + H(+). It catalyses the reaction a secondary alcohol + NAD(+) = a ketone + NADH + H(+). The catalysed reaction is S-(hydroxymethyl)glutathione + NADP(+) = S-formylglutathione + NADPH + H(+). The enzyme catalyses S-(hydroxymethyl)glutathione + NAD(+) = S-formylglutathione + NADH + H(+). It carries out the reaction S-nitrosoglutathione + NADH + H(+) = S-(hydroxysulfenamide)glutathione + NAD(+). Class-III ADH is remarkably ineffective in oxidizing ethanol, but it readily catalyzes the oxidation of long-chain primary alcohols and the oxidation of S-(hydroxymethyl) glutathione. Also acts as a S-nitroso-glutathione reductase by catalyzing the NADH-dependent reduction of S-nitrosoglutathione, thereby regulating protein S-nitrosylation. In Myxine glutinosa (Atlantic hagfish), this protein is Alcohol dehydrogenase class-3.